A 423-amino-acid chain; its full sequence is Dihydroorotase (423 aa).

The Zn(2+) site is built by histidine 60 and histidine 62. Substrate is bound by residues 62 to 64 and asparagine 94; that span reads HFR. 4 residues coordinate Zn(2+): aspartate 152, histidine 179, histidine 232, and aspartate 305. The active site involves aspartate 305. Substrate contacts are provided by residues histidine 309 and 323–324; that span reads PG.

The protein belongs to the metallo-dependent hydrolases superfamily. DHOase family. Class I DHOase subfamily. The cofactor is Zn(2+).

It catalyses the reaction (S)-dihydroorotate + H2O = N-carbamoyl-L-aspartate + H(+). The protein operates within pyrimidine metabolism; UMP biosynthesis via de novo pathway; (S)-dihydroorotate from bicarbonate: step 3/3. In terms of biological role, catalyzes the reversible cyclization of carbamoyl aspartate to dihydroorotate. The protein is Dihydroorotase of Sulfurihydrogenibium sp. (strain YO3AOP1).